Here is a 315-residue protein sequence, read N- to C-terminus: 4-hydroxy-3-methylbut-2-enyl diphosphate reductase (315 aa).

A [4Fe-4S] cluster-binding site is contributed by cysteine 12. (2E)-4-hydroxy-3-methylbut-2-enyl diphosphate contacts are provided by histidine 41 and histidine 74. Positions 41 and 74 each coordinate dimethylallyl diphosphate. Histidine 41 and histidine 74 together coordinate isopentenyl diphosphate. Cysteine 96 contacts [4Fe-4S] cluster. A (2E)-4-hydroxy-3-methylbut-2-enyl diphosphate-binding site is contributed by histidine 124. A dimethylallyl diphosphate-binding site is contributed by histidine 124. Histidine 124 lines the isopentenyl diphosphate pocket. The active-site Proton donor is the glutamate 126. Residue threonine 168 coordinates (2E)-4-hydroxy-3-methylbut-2-enyl diphosphate. Cysteine 198 is a binding site for [4Fe-4S] cluster. Residues serine 226, serine 227, asparagine 228, and serine 270 each contribute to the (2E)-4-hydroxy-3-methylbut-2-enyl diphosphate site. The dimethylallyl diphosphate site is built by serine 226, serine 227, asparagine 228, and serine 270. Positions 226, 227, 228, and 270 each coordinate isopentenyl diphosphate.

Belongs to the IspH family. The cofactor is [4Fe-4S] cluster.

The enzyme catalyses isopentenyl diphosphate + 2 oxidized [2Fe-2S]-[ferredoxin] + H2O = (2E)-4-hydroxy-3-methylbut-2-enyl diphosphate + 2 reduced [2Fe-2S]-[ferredoxin] + 2 H(+). It carries out the reaction dimethylallyl diphosphate + 2 oxidized [2Fe-2S]-[ferredoxin] + H2O = (2E)-4-hydroxy-3-methylbut-2-enyl diphosphate + 2 reduced [2Fe-2S]-[ferredoxin] + 2 H(+). It participates in isoprenoid biosynthesis; dimethylallyl diphosphate biosynthesis; dimethylallyl diphosphate from (2E)-4-hydroxy-3-methylbutenyl diphosphate: step 1/1. Its pathway is isoprenoid biosynthesis; isopentenyl diphosphate biosynthesis via DXP pathway; isopentenyl diphosphate from 1-deoxy-D-xylulose 5-phosphate: step 6/6. In terms of biological role, catalyzes the conversion of 1-hydroxy-2-methyl-2-(E)-butenyl 4-diphosphate (HMBPP) into a mixture of isopentenyl diphosphate (IPP) and dimethylallyl diphosphate (DMAPP). Acts in the terminal step of the DOXP/MEP pathway for isoprenoid precursor biosynthesis. The polypeptide is 4-hydroxy-3-methylbut-2-enyl diphosphate reductase (Pseudomonas putida (strain W619)).